We begin with the raw amino-acid sequence, 1513 residues long: DNA topoisomerase 2-binding protein 1-A (1513 aa).

BRCT domains follow at residues 101–189 and 194–283; these read VYNM…YSDV and YLCP…MYKI. Positions 289–308 are disordered; that stretch reads IKSVPDTSTPTGGNSKPNSR. BRCT domains follow at residues 354–444, 530–621, and 629–726; these read APDD…IYFH, ADTS…SNAL, and EGST…SYLV. The segment covering 789–799 has biased composition (polar residues); that stretch reads QHNKNPQTSGG. The interval 789–809 is disordered; it reads QHNKNPQTSGGESKVLQREPS. The Nuclear localization signal motif lies at 844–850; sequence PNQKNRT. A BRCT 6 domain is found at 892-984; the sequence is DNSKLLINVV…KRVPEALYPH (93 aa). 2 disordered regions span residues 1031-1053 and 1086-1109; these read ETSD…SKDV and SVGR…RNGR. Residue serine 1131 is modified to Phosphoserine. BRCT domains are found at residues 1253-1344 and 1383-1480; these read SKEE…DYEW and IAEG…NYCL. A Nuclear localization signal motif is present at residues 1508–1511; the sequence is KRSR.

Belongs to the TOPBP1 family. As to quaternary structure, interacts with cdc45. Interacts (via BRCT domains) with ticrr; interaction is cdk2-dependent. Interacts with atr in the presence of atrip. Interacts with recql4 (via N-terminus). Interacts with gmnc. Interacts with cip2a; forming the CIP2A-TOPBP1 complex. Post-translationally, phosphorylation at Ser-1131 is essential for phosphorylation of chek1, and thus for checkpoint regulation.

It localises to the nucleus. The protein resides in the chromosome. Its subcellular location is the cytoplasm. The protein localises to the cytoskeleton. It is found in the microtubule organizing center. It localises to the centrosome. The protein resides in the spindle pole. Scaffold protein that acts as a key protein-protein adapter in DNA replication and DNA repair. Composed of multiple BRCT domains, which specifically recognize and bind phosphorylated proteins, bringing proteins together into functional combinations. Required for DNA replication initiation but not for the formation of pre-replicative complexes or the elongation stages. Necessary for the loading of replication factors onto chromatin, including gmnc, cdc45, DNA polymerases and components of the GINS complex such as ginsl/sld5. Plays a central role in DNA repair by bridging proteins and promoting recruitment of proteins to DNA damage sites. Involved in double-strand break (DSB) repair via homologous recombination in S-phase by promoting the exchange between the DNA replication factor A (RPA) complex and RAD51. Involved in microhomology-mediated end-joining (MMEJ) DNA repair by promoting recruitment of polymerase theta (POLQ) to DNA damage sites during mitosis. In response to DNA damage, triggers the recruitment of checkpoint signaling proteins on chromatin, which activate the chek1 signaling pathway and block S-phase progression. Increases the kinase activity of atr to numerous substrates, and is required for the phosphorylation of Rad1. Together with cip2a, plays an essential role in the response to genome instability generated by the presence of acentric chromosome fragments derived from shattered chromosomes within micronuclei. The CIP2A-TOPBP1 complex tethers chromosome fragments during mitosis to ensure clustered segregation of the fragments to a single daughter cell nucleus, facilitating re-ligation with limited chromosome scattering and loss. The chain is DNA topoisomerase 2-binding protein 1-A (topbp1-A) from Xenopus laevis (African clawed frog).